The chain runs to 458 residues: 3-isopropylmalate dehydratase large subunit (458 aa).

Positions 339, 399, and 402 each coordinate [4Fe-4S] cluster.

It belongs to the aconitase/IPM isomerase family. LeuC type 1 subfamily. As to quaternary structure, heterodimer of LeuC and LeuD. [4Fe-4S] cluster serves as cofactor.

The enzyme catalyses (2R,3S)-3-isopropylmalate = (2S)-2-isopropylmalate. The protein operates within amino-acid biosynthesis; L-leucine biosynthesis; L-leucine from 3-methyl-2-oxobutanoate: step 2/4. Functionally, catalyzes the isomerization between 2-isopropylmalate and 3-isopropylmalate, via the formation of 2-isopropylmaleate. This Lactococcus lactis subsp. cremoris (strain SK11) protein is 3-isopropylmalate dehydratase large subunit.